A 392-amino-acid polypeptide reads, in one-letter code: Chorismate synthase (392 aa).

The NADP(+) site is built by Arg40 and Arg46. Residues 135–137 (RAS), 256–257 (QA), Gly300, 315–319 (KPIST), and Arg341 each bind FMN.

The protein belongs to the chorismate synthase family. In terms of assembly, homotetramer. The cofactor is FMNH2.

It carries out the reaction 5-O-(1-carboxyvinyl)-3-phosphoshikimate = chorismate + phosphate. The protein operates within metabolic intermediate biosynthesis; chorismate biosynthesis; chorismate from D-erythrose 4-phosphate and phosphoenolpyruvate: step 7/7. In terms of biological role, catalyzes the anti-1,4-elimination of the C-3 phosphate and the C-6 proR hydrogen from 5-enolpyruvylshikimate-3-phosphate (EPSP) to yield chorismate, which is the branch point compound that serves as the starting substrate for the three terminal pathways of aromatic amino acid biosynthesis. This reaction introduces a second double bond into the aromatic ring system. The protein is Chorismate synthase of Acidothermus cellulolyticus (strain ATCC 43068 / DSM 8971 / 11B).